Reading from the N-terminus, the 152-residue chain is Xanthine-guanine phosphoribosyltransferase (152 aa).

5-phospho-alpha-D-ribose 1-diphosphate-binding positions include 37–38 (RG) and 88–96 (DDLVDTGNT). Aspartate 89 is a Mg(2+) binding site. The guanine site is built by aspartate 92 and isoleucine 135. 2 residues coordinate xanthine: aspartate 92 and isoleucine 135. Residues 92–96 (DTGNT) and 134–135 (WI) contribute to the GMP site.

The protein belongs to the purine/pyrimidine phosphoribosyltransferase family. XGPT subfamily. In terms of assembly, homotetramer. It depends on Mg(2+) as a cofactor.

Its subcellular location is the cell inner membrane. The enzyme catalyses GMP + diphosphate = guanine + 5-phospho-alpha-D-ribose 1-diphosphate. It catalyses the reaction XMP + diphosphate = xanthine + 5-phospho-alpha-D-ribose 1-diphosphate. It carries out the reaction IMP + diphosphate = hypoxanthine + 5-phospho-alpha-D-ribose 1-diphosphate. It functions in the pathway purine metabolism; GMP biosynthesis via salvage pathway; GMP from guanine: step 1/1. Its pathway is purine metabolism; XMP biosynthesis via salvage pathway; XMP from xanthine: step 1/1. Purine salvage pathway enzyme that catalyzes the transfer of the ribosyl-5-phosphate group from 5-phospho-alpha-D-ribose 1-diphosphate (PRPP) to the N9 position of the 6-oxopurines guanine and xanthine to form the corresponding ribonucleotides GMP (guanosine 5'-monophosphate) and XMP (xanthosine 5'-monophosphate), with the release of PPi. To a lesser extent, also acts on hypoxanthine. The chain is Xanthine-guanine phosphoribosyltransferase from Mannheimia succiniciproducens (strain KCTC 0769BP / MBEL55E).